A 763-amino-acid chain; its full sequence is Protein CHROMATIN REMODELING 19 (763 aa).

2 disordered regions span residues 1–43 (MKRD…TPSI) and 114–149 (EDEEASDDDDDEAESSASEDEFGGGGGGSGGRRGED). Over residues 23-34 (VLKRPRTPKKTR) the composition is skewed to basic residues. The segment covering 114 to 135 (EDEEASDDDDDEAESSASEDEF) has biased composition (acidic residues). Residues 226–404 (LLYKKGIEGA…WSLLEFMLPD (179 aa)) enclose the Helicase ATP-binding domain. 239 to 246 (DEMGLGKT) is a binding site for ATP. The DEAH box motif lies at 353–356 (DEAH). Residues 462–482 (RKQEDAYKEAIEEYRAASQAR) adopt a coiled-coil conformation. Residues 520-527 (IRRIYSDE) carry the Nuclear localization signal motif. Residues 592–742 (TLAELLPSMK…AAVLESGVHV (151 aa)) form the Helicase C-terminal domain.

Belongs to the SNF2/RAD54 helicase family. As to quaternary structure, interacts with SUVR2 and itself.

The protein resides in the nucleus. DNA helicase that possesses intrinsic ATP-dependent nucleosome-remodeling activity and is both required for DNA repair and heterochromatin organization. Promotes DNA end resection of double-strand breaks (DSBs) following DNA damage: probably acts by weakening histone DNA interactions in nucleosomes flanking DSBs. Probable chromatin remodeling factor. Probable helicase-like transcription factor involved in transcriptional gene silencing. Associates with SUVR2 and contributes to transcriptional gene silencing at RNA-directed DNA methylation (RdDM) target loci but also at RdDM-independent target loci. May be involved in nucleosome positioning to form ordered nucleosome arrays on chromatin. This chain is Protein CHROMATIN REMODELING 19, found in Arabidopsis thaliana (Mouse-ear cress).